A 111-amino-acid polypeptide reads, in one-letter code: UPF0060 membrane protein Ajs_1473 (111 aa).

Transmembrane regions (helical) follow at residues 8 to 28, 33 to 53, 65 to 85, and 88 to 108; these read ILFA…WLVV, SAWL…LLTL, YGGM…GVAL, and WDFV…LQPA.

Belongs to the UPF0060 family.

The protein localises to the cell inner membrane. The polypeptide is UPF0060 membrane protein Ajs_1473 (Acidovorax sp. (strain JS42)).